Here is a 195-residue protein sequence, read N- to C-terminus: MPKGNKKPNEKKEELEKFAKELQGSDSDEDAVVIEQPTVEPKLPQNDSSSSNKIVLSQAEKDLLRTELDKTEEEISTLKQVLSARQKHAAELKRKLGLTPFSELSQDINRSLKTVTDTDAYQKTAEVAAATSDTVKEKWNDMRNSSLFKSFESKLGSALNNAKMAASTSIDHLAGAARGPSQTGTPVAEEAKPIS.

Disordered stretches follow at residues 1-54 (MPKG…SNKI) and 173-195 (LAGA…KPIS). Basic and acidic residues predominate over residues 7–20 (KPNEKKEELEKFAK). Residues 45–54 (QNDSSSSNKI) are compositionally biased toward polar residues. Positions 48–97 (SSSSNKIVLSQAEKDLLRTELDKTEEEISTLKQVLSARQKHAAELKRKLG) form a coiled coil.

This sequence belongs to the TPD52 family.

This is an uncharacterized protein from Caenorhabditis elegans.